Here is a 740-residue protein sequence, read N- to C-terminus: ATP-dependent RNA helicase DDX1 (740 aa).

The tract at residues M1–V448 is interaction with dsRNA. Positions A2 to W428 constitute a Helicase ATP-binding domain. A46–T53 lines the ATP pocket. The 178-residue stretch at D70–F247 folds into the B30.2/SPRY domain. The DEAD box signature appears at D370–D373. Positions K493–V681 constitute a Helicase C-terminal domain.

This sequence belongs to the DEAD box helicase family. DDX1 subfamily. In terms of tissue distribution, detected in embryonic retina, brain, heart and liver (at protein level). Detected in embryonic retina, brain, heart, kidney and liver.

It is found in the nucleus. The protein localises to the cytoplasm. The protein resides in the cytoplasmic granule. It localises to the cytosol. Its subcellular location is the mitochondrion. The catalysed reaction is ATP + H2O = ADP + phosphate + H(+). Acts as an ATP-dependent RNA helicase, able to unwind both RNA-RNA and RNA-DNA duplexes. Possesses 5' single-stranded RNA overhang nuclease activity. Acts as a positive regulator of transcription. May be involved in 3'-end cleavage and polyadenylation of pre-mRNAs. Binds DNA and RNA. Component of the tRNA-splicing ligase complex required to facilitate the enzymatic turnover of catalytic subunit RTCB. Binds (via helicase ATP-binding domain) on both short and long poly(I:C) dsRNA. This chain is ATP-dependent RNA helicase DDX1 (DDX1), found in Gallus gallus (Chicken).